Reading from the N-terminus, the 588-residue chain is Dual specificity tyrosine-phosphorylation-regulated kinase 3 (588 aa).

The disordered stretch occupies residues 1–188; it reads MGGTARGPGR…HGVIGGPNNG (188 aa). Positions 97–134 are enriched in polar residues; it reads SNTIQSDGISDSEKCSPTVSQGKSSDCLNTVKSNSSSK. One can recognise a Protein kinase domain in the interval 209–522; sequence YEVLKIIGKG…PAQALRHPWI (314 aa). ATP contacts are provided by residues 215 to 223, lysine 238, and 288 to 291; these read IGKGSFGQV and FELL. Aspartate 335 (proton acceptor) is an active-site residue. Serine 350 bears the Phosphoserine mark. A Phosphotyrosine modification is found at tyrosine 369. The Nuclear localization signal motif lies at 468 to 481; the sequence is RSRRGKKRGPPGSK.

Belongs to the protein kinase superfamily. CMGC Ser/Thr protein kinase family. MNB/DYRK subfamily. As to quaternary structure, interacts with SIRT1. Requires Mg(2+) as cofactor. Ubiquitinated at anaphase by the anaphase-promoting complex (APC/C), leading to its degradation by the proteasome. Post-translationally, protein kinase activity is activated following autophosphorylation at Tyr-369. Autophosphorylation at Ser-350 stabilizes the protein and enhances the protein kinase activity. As to expression, isoform 1: Highly expressed in testis and in hematopoietic tissue such as fetal liver, and bone marrow. Isoform 1: Predominant form in fetal liver and bone marrow. Isoform 1: Present at low levels in heart, pancreas, lymph node and thymus. Isoform 2: Highly expressed in testis and in hematopoietic tissue such as fetal liver, and bone marrow. Isoform 2: Predominant form in testis. Isoform 2: Present at low levels in heart, pancreas, lymph node and thymus.

It is found in the nucleus. The protein localises to the cytoplasm. Its subcellular location is the nucleus speckle. It localises to the cytoplasmic granule. The protein resides in the cytoskeleton. It is found in the microtubule organizing center. The protein localises to the centrosome. It carries out the reaction L-seryl-[protein] + ATP = O-phospho-L-seryl-[protein] + ADP + H(+). The catalysed reaction is L-threonyl-[protein] + ATP = O-phospho-L-threonyl-[protein] + ADP + H(+). It catalyses the reaction L-tyrosyl-[protein] + ATP = O-phospho-L-tyrosyl-[protein] + ADP + H(+). With respect to regulation, protein kinase activity is activated following autophosphorylation at Tyr-369. Inhibited by harmine, an ATP competitive inhibitor. Inhibited by small-compound GSK-626616. In terms of biological role, dual-specificity protein kinase that promotes disassembly of several types of membraneless organelles during mitosis, such as stress granules, nuclear speckles and pericentriolar material. Dual-specificity tyrosine-regulated kinases (DYRKs) autophosphorylate a critical tyrosine residue in their activation loop and phosphorylate their substrate on serine and threonine residues. Acts as a central dissolvase of membraneless organelles during the G2-to-M transition, after the nuclear-envelope breakdown: acts by mediating phosphorylation of multiple serine and threonine residues in unstructured domains of proteins, such as SRRM1 and PCM1. Does not mediate disassembly of all membraneless organelles: disassembly of P-body and nucleolus is not regulated by DYRK3. Dissolution of membraneless organelles at the onset of mitosis is also required to release mitotic regulators, such as ZNF207, from liquid-unmixed organelles where they are sequestered and keep them dissolved during mitosis. Regulates mTORC1 by mediating the dissolution of stress granules: during stressful conditions, DYRK3 partitions from the cytosol to the stress granule, together with mTORC1 components, which prevents mTORC1 signaling. When stress signals are gone, the kinase activity of DYRK3 is required for the dissolution of stress granule and mTORC1 relocation to the cytosol: acts by mediating the phosphorylation of the mTORC1 inhibitor AKT1S1, allowing full reactivation of mTORC1 signaling. Also acts as a negative regulator of EPO-dependent erythropoiesis: may place an upper limit on red cell production during stress erythropoiesis. Inhibits cell death due to cytokine withdrawal in hematopoietic progenitor cells. Promotes cell survival upon genotoxic stress through phosphorylation of SIRT1: this in turn inhibits p53/TP53 activity and apoptosis. The polypeptide is Dual specificity tyrosine-phosphorylation-regulated kinase 3 (Homo sapiens (Human)).